The following is a 157-amino-acid chain: Crossover junction endodeoxyribonuclease RuvC (157 aa).

Residues Asp-7, Glu-66, and Asp-139 contribute to the active site. The Mg(2+) site is built by Asp-7, Glu-66, and Asp-139.

Belongs to the RuvC family. As to quaternary structure, homodimer which binds Holliday junction (HJ) DNA. The HJ becomes 2-fold symmetrical on binding to RuvC with unstacked arms; it has a different conformation from HJ DNA in complex with RuvA. In the full resolvosome a probable DNA-RuvA(4)-RuvB(12)-RuvC(2) complex forms which resolves the HJ. Mg(2+) is required as a cofactor.

It is found in the cytoplasm. It carries out the reaction Endonucleolytic cleavage at a junction such as a reciprocal single-stranded crossover between two homologous DNA duplexes (Holliday junction).. The RuvA-RuvB-RuvC complex processes Holliday junction (HJ) DNA during genetic recombination and DNA repair. Endonuclease that resolves HJ intermediates. Cleaves cruciform DNA by making single-stranded nicks across the HJ at symmetrical positions within the homologous arms, yielding a 5'-phosphate and a 3'-hydroxyl group; requires a central core of homology in the junction. The consensus cleavage sequence is 5'-(A/T)TT(C/G)-3'. Cleavage occurs on the 3'-side of the TT dinucleotide at the point of strand exchange. HJ branch migration catalyzed by RuvA-RuvB allows RuvC to scan DNA until it finds its consensus sequence, where it cleaves and resolves the cruciform DNA. This chain is Crossover junction endodeoxyribonuclease RuvC, found in Campylobacter concisus (strain 13826).